A 292-amino-acid chain; its full sequence is Probable alpha-L-glutamate ligase (292 aa).

Residues H104–E287 form the ATP-grasp domain. ATP is bound by residues K141, E178–F179, D187, and R211–N213. Mg(2+) contacts are provided by D248, E260, and N262. Residues D248, E260, and N262 each coordinate Mn(2+).

This sequence belongs to the RimK family. Mg(2+) serves as cofactor. Mn(2+) is required as a cofactor.

This Stenotrophomonas maltophilia (strain R551-3) protein is Probable alpha-L-glutamate ligase.